The chain runs to 405 residues: Angiopoietin-related protein 4 (405 aa).

Positions 1–23 are cleaved as a signal peptide; that stretch reads MRCAPTAGAALVLCAATAGLLSA. Residues 54–146 are a coiled coil; it reads GLREHVERTR…QNLQSQIDLL (93 aa). Residue N176 is glycosylated (N-linked (GlcNAc...) asparagine). One can recognise a Fibrinogen C-terminal domain in the interval 178-400; that stretch reads TRLHRPPRDC…ATTLLIQPME (223 aa). Cysteines 187 and 215 form a disulfide. N231 and N237 each carry an N-linked (GlcNAc...) asparagine glycan. The cysteines at positions 340 and 353 are disulfide-linked.

In terms of assembly, homooligomer; disulfide-linked via Cys residues in the N-terminal part of the protein. The homooligomer undergoes proteolytic processing to release its carboxyl fibrinogen-like domain, which circulates as a monomer. The homooligomer unprocessed form is able to interact with the extracellular matrix. In terms of processing, N-glycosylated. Post-translationally, forms disulfide-linked dimers and tetramers. Cleaved into a smaller N-terminal chain and a larger chain that contains the fibrinogen C-terminal domain; both cleaved and uncleaved forms are detected in the extracellular space. The cleaved form is not present within the cell.

The protein localises to the secreted. Its subcellular location is the extracellular space. It is found in the extracellular matrix. Its function is as follows. Mediates inactivation of the lipoprotein lipase LPL, and thereby plays a role in the regulation of triglyceride clearance from the blood serum and in lipid metabolism. May also play a role in regulating glucose homeostasis and insulin sensitivity. Inhibits proliferation, migration, and tubule formation of endothelial cells and reduces vascular leakage. Upon heterologous expression, inhibits the adhesion of endothelial cell to the extracellular matrix (ECM), and inhibits the reorganization of the actin cytoskeleton, formation of actin stress fibers and focal adhesions in endothelial cells that have adhered to ANGPTL4-containing ECM (in vitro). Depending on context, may modulate tumor-related angiogenesis. Mediates inactivation of the lipoprotein lipase LPL, and thereby plays an important role in the regulation of triglyceride clearance from the blood serum and in lipid metabolism. Has higher activity in LPL inactivation than the uncleaved protein. The sequence is that of Angiopoietin-related protein 4 (Angptl4) from Rattus norvegicus (Rat).